Consider the following 117-residue polypeptide: DNA-directed RNA polymerase subunit omega (117 aa).

Basic and acidic residues predominate over residues 96–105 (KEEAEEEAKQ). The interval 96 to 117 (KEEAEEEAKQKNSRAAKAAAAE) is disordered. A compositionally biased stretch (low complexity) spans 108–117 (SRAAKAAAAE).

This sequence belongs to the RNA polymerase subunit omega family. The RNAP catalytic core consists of 2 alpha, 1 beta, 1 beta' and 1 omega subunit. When a sigma factor is associated with the core the holoenzyme is formed, which can initiate transcription.

The catalysed reaction is RNA(n) + a ribonucleoside 5'-triphosphate = RNA(n+1) + diphosphate. Its function is as follows. Promotes RNA polymerase assembly. Latches the N- and C-terminal regions of the beta' subunit thereby facilitating its interaction with the beta and alpha subunits. This is DNA-directed RNA polymerase subunit omega from Lactococcus lactis subsp. cremoris (strain SK11).